Reading from the N-terminus, the 280-residue chain is uncharacterized protein (280 aa).

The KilA-N domain occupies 26–127 (YFMSMKLLDV…TRVSILMRYY (102 aa)).

This is an uncharacterized protein from Vertebrata (FPV).